The primary structure comprises 339 residues: Centromere protein N (339 aa).

Phosphoserine occurs at positions 226 and 235.

Belongs to the CENP-N/CHL4 family. Component of the CENPA-NAC complex, at least composed of CENPA, CENPC, CENPH, CENPM, CENPN, CENPT and CENPU. The CENPA-NAC complex interacts with the CENPA-CAD complex, composed of CENPI, CENPK, CENPL, CENPO, CENPP, CENPQ, CENPR and CENPS. Interacts directly with CENPA. Identified in a centromere complex containing histones H2A, H2B and H4, and at least CENPA, CENPB, CENPC, CENPT, CENPN, HJURP, SUPT16H, SSRP1 and RSF1.

Its subcellular location is the nucleus. The protein localises to the chromosome. It localises to the centromere. It is found in the kinetochore. Component of the CENPA-NAC (nucleosome-associated) complex, a complex that plays a central role in assembly of kinetochore proteins, mitotic progression and chromosome segregation. The CENPA-NAC complex recruits the CENPA-CAD (nucleosome distal) complex and may be involved in incorporation of newly synthesized CENPA into centromeres. CENPN is the first protein to bind specifically to CENPA nucleosomes and the direct binding of CENPA nucleosomes by CENPN is required for centromere assembly. Required for chromosome congression and efficiently align the chromosomes on a metaphase plate. This is Centromere protein N (CENPN) from Bos taurus (Bovine).